The chain runs to 509 residues: Glutamyl-tRNA(Gln) amidotransferase subunit B, mitochondrial (509 aa).

Belongs to the GatB/GatE family. GatB subfamily. In terms of assembly, subunit of the heterotrimeric GatFAB amidotransferase (AdT) complex, composed of A, B and F subunits.

The protein resides in the mitochondrion. It carries out the reaction L-glutamyl-tRNA(Gln) + L-glutamine + ATP + H2O = L-glutaminyl-tRNA(Gln) + L-glutamate + ADP + phosphate + H(+). Functionally, allows the formation of correctly charged Gln-tRNA(Gln) through the transamidation of misacylated Glu-tRNA(Gln) in the mitochondria. The reaction takes place in the presence of glutamine and ATP through an activated gamma-phospho-Glu-tRNA(Gln). The polypeptide is Glutamyl-tRNA(Gln) amidotransferase subunit B, mitochondrial (Candida dubliniensis (strain CD36 / ATCC MYA-646 / CBS 7987 / NCPF 3949 / NRRL Y-17841) (Yeast)).